We begin with the raw amino-acid sequence, 234 residues long: MTKIAMANFKSAMPIFKSHAYLKELEKTLKPQHCDRVFVFPDFLGLLPNAFLHFTLGVQNAYPKDCGAFTGEITSKHLEELKINTLLIGHSERRVLLKESPNFLKEKFDFFKDKKFKIVYCIGEDLKTREKGLGAVKEFLNEQLENIDLDYQNLIVAYEPIWAIGTGKSASLEDIYLTHGFLKQHLNQKMPLLYGGSVNTQNAKEILGIDSVDGLLIGSTSLELENFKTIISFL.

A substrate-binding site is contributed by 8–10; the sequence is NFK. Histidine 90 (electrophile) is an active-site residue. The Proton acceptor role is filled by glutamate 159. Residues glycine 165 and serine 197 each coordinate substrate.

It belongs to the triosephosphate isomerase family. Homodimer.

Its subcellular location is the cytoplasm. It carries out the reaction D-glyceraldehyde 3-phosphate = dihydroxyacetone phosphate. Its pathway is carbohydrate biosynthesis; gluconeogenesis. It participates in carbohydrate degradation; glycolysis; D-glyceraldehyde 3-phosphate from glycerone phosphate: step 1/1. Functionally, involved in the gluconeogenesis. Catalyzes stereospecifically the conversion of dihydroxyacetone phosphate (DHAP) to D-glyceraldehyde-3-phosphate (G3P). This chain is Triosephosphate isomerase, found in Helicobacter acinonychis (strain Sheeba).